A 79-amino-acid polypeptide reads, in one-letter code: Conotoxin VnMKLT1-01121 (79 aa).

A signal peptide spans 1–22 (MKLTCMMIVAVLFLTAWTFVTA). A propeptide spanning residues 23-48 (DDSRNGLEYLFPKAHYEMNPEASKLN) is cleaved from the precursor. 3 disulfide bridges follow: C53-C70, C60-C74, and C69-C78.

The protein belongs to the conotoxin O1 superfamily. Expressed by the venom duct.

It is found in the secreted. The chain is Conotoxin VnMKLT1-01121 from Conus ventricosus (Mediterranean cone).